Reading from the N-terminus, the 89-residue chain is Microcin N (89 aa).

The N-terminal stretch at 1 to 15 (MRELDREELNCVGGA) is a signal peptide.

The protein belongs to the class IIa microcin family. In terms of processing, mass spectrometry suggests 3 of the 4 Met residues of the mature peptide are oxidized.

Its subcellular location is the secreted. In terms of biological role, active against E.coli and Salmonella, but not Listeria or Campylobacter. Channel-forming microcin. Probably neutralized by its immunity protein McnI. In Escherichia coli, this protein is Microcin N.